The sequence spans 259 residues: Uridylate kinase (259 aa).

ATP is bound at residue 21–24 (KLSG). Gly-63 is a UMP binding site. Residues Gly-64 and Arg-68 each coordinate ATP. UMP contacts are provided by residues Asp-83 and 144–151 (TGNPYFTT). ATP-binding residues include Thr-171, Phe-177, and Asp-180.

It belongs to the UMP kinase family. As to quaternary structure, homohexamer.

The protein localises to the cytoplasm. It carries out the reaction UMP + ATP = UDP + ADP. The protein operates within pyrimidine metabolism; CTP biosynthesis via de novo pathway; UDP from UMP (UMPK route): step 1/1. Its activity is regulated as follows. Inhibited by UTP. In terms of biological role, catalyzes the reversible phosphorylation of UMP to UDP. This is Uridylate kinase from Salinibacter ruber (strain DSM 13855 / M31).